Consider the following 235-residue polypeptide: ATP-dependent dethiobiotin synthetase BioD (235 aa).

12–17 provides a ligand contact to ATP; sequence GVGKTF. Thr-16 lines the Mg(2+) pocket. Lys-37 is an active-site residue. Substrate is bound at residue Ser-41. Residues Asp-51, 112–115, and 202–204 contribute to the ATP site; these read EGAG and PKL. Asp-51 and Glu-112 together coordinate Mg(2+).

It belongs to the dethiobiotin synthetase family. In terms of assembly, homodimer. Mg(2+) serves as cofactor.

The protein resides in the cytoplasm. It catalyses the reaction (7R,8S)-7,8-diammoniononanoate + CO2 + ATP = (4R,5S)-dethiobiotin + ADP + phosphate + 3 H(+). It participates in cofactor biosynthesis; biotin biosynthesis; biotin from 7,8-diaminononanoate: step 1/2. Catalyzes a mechanistically unusual reaction, the ATP-dependent insertion of CO2 between the N7 and N8 nitrogen atoms of 7,8-diaminopelargonic acid (DAPA, also called 7,8-diammoniononanoate) to form a ureido ring. This is ATP-dependent dethiobiotin synthetase BioD from Bacillus licheniformis (strain ATCC 14580 / DSM 13 / JCM 2505 / CCUG 7422 / NBRC 12200 / NCIMB 9375 / NCTC 10341 / NRRL NRS-1264 / Gibson 46).